A 200-amino-acid chain; its full sequence is UPF0316 protein SACOL1973 (200 aa).

Transmembrane regions (helical) follow at residues 8 to 28 (PWLM…FLTM), 40 to 60 (IAAS…GLVM), and 66 to 86 (IQNI…GMKI).

The protein belongs to the UPF0316 family.

The protein localises to the cell membrane. The sequence is that of UPF0316 protein SACOL1973 from Staphylococcus aureus (strain COL).